Consider the following 328-residue polypeptide: P2Y purinoceptor 6 (328 aa).

Residues M1–L27 are Extracellular-facing. An N-linked (GlcNAc...) asparagine glycan is attached at N5. A helical membrane pass occupies residues L28–I48. Topologically, residues A49–A62 are cytoplasmic. The helical transmembrane segment at V63–I83 threads the bilayer. Residues Y84–L101 lie on the Extracellular side of the membrane. The cysteines at positions 99 and 177 are disulfide-linked. Residues V102–F122 form a helical membrane-spanning segment. The Cytoplasmic segment spans residues Q123 to A144. A helical membrane pass occupies residues W145 to F165. Residues A166 to M194 lie on the Extracellular side of the membrane. N173 is a glycosylation site (N-linked (GlcNAc...) asparagine). Residues A195 to M215 form a helical membrane-spanning segment. The Cytoplasmic portion of the chain corresponds to A216–K236. Residues A237–I257 form a helical membrane-spanning segment. At T258 to A280 the chain is on the extracellular side. The helical transmembrane segment at A281 to F303 threads the bilayer. At T304–V328 the chain is on the cytoplasmic side.

It belongs to the G-protein coupled receptor 1 family. In terms of tissue distribution, abundantly expressed in various tissues including lung, stomach, intestine, spleen, mesentery, heart, and, most prominently, aorta.

The protein resides in the cell membrane. Its function is as follows. Receptor for extracellular UTP &gt; ADP = 2-methylthio-ATP &gt; ADP-beta-S &gt; ATP = ATP-gamma-S. The activity of this receptor is mediated by G proteins which activate a phosphatidylinositol-calcium second messenger system. Functionally coupled to phospholipase C. This is P2Y purinoceptor 6 (P2ry6) from Rattus norvegicus (Rat).